A 260-amino-acid chain; its full sequence is 3-alpha-(or 20-beta)-hydroxysteroid dehydrogenase (260 aa).

Positions 17, 19, 38, 61, 62, 88, 153, 157, 186, 188, and 191 each coordinate NAD(+). Tyrosine 153 functions as the Proton acceptor in the catalytic mechanism.

The protein belongs to the short-chain dehydrogenases/reductases (SDR) family. Homotetramer.

It carries out the reaction androstan-3alpha,17beta-diol + NAD(+) = 17beta-hydroxyandrostanone + NADH + H(+). It participates in lipid metabolism; steroid degradation. Its function is as follows. Probably involved in steroid metabolism. This is 3-alpha-(or 20-beta)-hydroxysteroid dehydrogenase (fabG3) from Mycobacterium bovis (strain ATCC BAA-935 / AF2122/97).